The following is a 449-amino-acid chain: Histidinol dehydrogenase (449 aa).

Residues Tyr135, Gln199, and Asn229 each contribute to the NAD(+) site. Positions 252, 274, and 277 each coordinate substrate. The Zn(2+) site is built by Gln274 and His277. Active-site proton acceptor residues include Glu343 and His344. Substrate-binding residues include His344, Asp377, Glu431, and His436. Asp377 lines the Zn(2+) pocket. His436 provides a ligand contact to Zn(2+).

It belongs to the histidinol dehydrogenase family. Requires Zn(2+) as cofactor.

It catalyses the reaction L-histidinol + 2 NAD(+) + H2O = L-histidine + 2 NADH + 3 H(+). Its pathway is amino-acid biosynthesis; L-histidine biosynthesis; L-histidine from 5-phospho-alpha-D-ribose 1-diphosphate: step 9/9. In terms of biological role, catalyzes the sequential NAD-dependent oxidations of L-histidinol to L-histidinaldehyde and then to L-histidine. This chain is Histidinol dehydrogenase, found in Corynebacterium diphtheriae (strain ATCC 700971 / NCTC 13129 / Biotype gravis).